We begin with the raw amino-acid sequence, 145 residues long: Large ribosomal subunit protein bL9 (145 aa).

The protein belongs to the bacterial ribosomal protein bL9 family.

Functionally, binds to the 23S rRNA. The protein is Large ribosomal subunit protein bL9 of Mesomycoplasma hyopneumoniae (strain 232) (Mycoplasma hyopneumoniae).